Consider the following 357-residue polypeptide: Popeye domain-containing protein 1 (357 aa).

The Extracellular portion of the chain corresponds to 1–38; sequence MDTTAISPLTPLGVIPDLKNATSVPFNETACENWKEIH. 2 N-linked (GlcNAc...) asparagine glycosylation sites follow: asparagine 20 and asparagine 27. Residues 39 to 59 form a helical membrane-spanning segment; that stretch reads HLVFHVANICFAAGLVIPTTL. Residues 60-62 are Cytoplasmic-facing; that stretch reads NLH. Residues 63–83 traverse the membrane as a helical segment; the sequence is MIFLRGLLTVGCALFIIWATL. The Extracellular portion of the chain corresponds to 84–89; sequence YRCALD. A helical membrane pass occupies residues 90–110; sequence IMIWNSVFLVVNLLHFIYLVY. Residues 111–357 are Cytoplasmic-facing; sequence KRRPIKIEKE…AEKLELQRLP (247 aa). The span at 309 to 323 shows a compositional bias: low complexity; that stretch reads GTSSSSSLRPGRTSP. A disordered region spans residues 309-357; it reads GTSSSSSLRPGRTSPYLRTSAKMKPIEESVEDDVFEAPSAEKLELQRLP. Residues 347 to 357 show a composition bias toward basic and acidic residues; the sequence is SAEKLELQRLP.

It belongs to the popeye family. In terms of assembly, homodimer. Homodimerization requires the C-terminus cytoplasmic region. In terms of tissue distribution, expressed in the heart and skeletal muscle (at protein level). Isoform 1 and isoform 4: expressed in heart, muscle, brain, stomach, kidney, lung and spleen.

Its subcellular location is the lateral cell membrane. It is found in the cell junction. The protein resides in the tight junction. It localises to the membrane. The protein localises to the cell membrane. Its subcellular location is the sarcolemma. It is found in the caveola. Its function is as follows. Cell adhesion molecule involved in the establishment and/or maintenance of cell integrity. Involved in the formation and regulation of the tight junction (TJ) paracellular permeability barrier in epithelial cells. Induces primordial adhesive contact and aggregation of epithelial cells in a Ca(2+)-independent manner. Involved in epithelial movement during corneal sheet formation and regeneration. May play a role in VAMP3-mediated vesicular transport and recycling of receptor molecules. May play a role in the regulation of cell shape and movement by modulating the Rho-GTPase activity. May be involved in skeletal muscle and heart development as well as in the maintenance of heart function. May also be involved in striated muscle regeneration and in the regulation of cell spreading. The polypeptide is Popeye domain-containing protein 1 (POPDC1) (Gallus gallus (Chicken)).